The sequence spans 429 residues: Transcriptional coactivator AacuS (429 aa).

The HTH iclR-type domain maps to 80–144 (MASQTQLLAC…GFLQEPELGH (65 aa)). A DNA-binding region (H-T-H motif) is located at residues 110–129 (IKDVAELIGVPENHICRIVR).

The protein resides in the nucleus. Its function is as follows. Transcriptional coactivator; part of the gene cluster that mediates the biosynthesis of the tetrahydroxanthone dimer secalonic acid D. The sequence is that of Transcriptional coactivator AacuS from Aspergillus aculeatus (strain ATCC 16872 / CBS 172.66 / WB 5094).